The primary structure comprises 540 residues: MAKDIKFSADARSAMVRGVDILADTVKVTLGPKGRNVVLEKSFGSPLITNDGVTIAKEIELEDHFENMGAKLVSEVASKTNDIAGDGTTTATVLTQAIVREGIKNVTAGANPIGIRRGIETAVATAVEALKANSVPVSNKEAIAQVAAVSSRSEKVGEYISEAMEKVGNDGVITIEESKGMETELDVVEGMQFDRGYLSQYMVTDNEKMVADLDNPYILITDKKISNIQEILPLLENILKTSRPLLIIADDVDGEALPTLVLNKIRGTFNVVAVKAPGFGDRRKAMLEDIAILTGGTVITEDLGLELKDATIEALGQASKVTVDKDSTVIVEGSGDAEAIANRVAVIKSQIESSTSDFDREKLQERLAKLSGGVAVIKVGAATETELKEMKLRIEDALNATRAAVEEGIVSGGGTAFVNVLSAVEALDLSGDEATGRNIVLRALEEPVRQIALNAGFEGSIVIDRLKNSEAGTGFNAATGEWVNMIDAGIIDPVKVTRSALQNAASVASLILTTEAVVANQPEPASPTPAMDPSMMGGMM.

ATP-binding positions include 29–32, 86–90, G413, 476–478, and D492; these read TLGP, DGTTT, and NAA.

It belongs to the chaperonin (HSP60) family. As to quaternary structure, forms a cylinder of 14 subunits composed of two heptameric rings stacked back-to-back. Interacts with the co-chaperonin GroES.

It is found in the cytoplasm. It catalyses the reaction ATP + H2O + a folded polypeptide = ADP + phosphate + an unfolded polypeptide.. In terms of biological role, together with its co-chaperonin GroES, plays an essential role in assisting protein folding. The GroEL-GroES system forms a nano-cage that allows encapsulation of the non-native substrate proteins and provides a physical environment optimized to promote and accelerate protein folding. The sequence is that of Chaperonin GroEL from Streptococcus anginosus.